Reading from the N-terminus, the 214-residue chain is ATP phosphoribosyltransferase (214 aa).

The protein belongs to the ATP phosphoribosyltransferase family. Short subfamily. Heteromultimer composed of HisG and HisZ subunits.

Its subcellular location is the cytoplasm. The catalysed reaction is 1-(5-phospho-beta-D-ribosyl)-ATP + diphosphate = 5-phospho-alpha-D-ribose 1-diphosphate + ATP. The protein operates within amino-acid biosynthesis; L-histidine biosynthesis; L-histidine from 5-phospho-alpha-D-ribose 1-diphosphate: step 1/9. Functionally, catalyzes the condensation of ATP and 5-phosphoribose 1-diphosphate to form N'-(5'-phosphoribosyl)-ATP (PR-ATP). Has a crucial role in the pathway because the rate of histidine biosynthesis seems to be controlled primarily by regulation of HisG enzymatic activity. This Lysinibacillus sphaericus (strain C3-41) protein is ATP phosphoribosyltransferase.